The following is a 213-amino-acid chain: Agglutinin isolectin 2 (213 aa).

An N-terminal signal peptide occupies residues 1–27 (MRKMMSTMALTLGAAVFLAFAAATAQA). Position 28 is a pyrrolidone carboxylic acid (Q28). Chitin-binding type-1 domains lie at 28–69 (QRCG…ACWT), 70–112 (SKRC…PCRA), 113–155 (DIKC…ACST), and 156–198 (DKPC…GCDA). 16 disulfide bridges follow: C30–C45, C39–C51, C44–C58, C62–C67, C73–C88, C82–C94, C87–C101, C105–C110, C116–C131, C125–C137, C130–C144, C148–C153, C159–C174, C168–C180, C173–C187, and C191–C196. 37–39 (MEC) serves as a coordination point for substrate. 89–100 (SQYGHCGFGAEY) lines the substrate pocket. 141 to 142 (SE) serves as a coordination point for substrate. Residues 199–213 (VFAGAITANSTLLAE) constitute a propeptide that is removed on maturation.

As to quaternary structure, homodimer, u-shaped.

Its function is as follows. N-acetyl-D-glucosamine / N-acetyl-D-neuraminic acid binding lectin. In Triticum aestivum (Wheat), this protein is Agglutinin isolectin 2.